A 171-amino-acid polypeptide reads, in one-letter code: Ribosome-binding factor A (171 aa).

Positions 126–138 are enriched in basic and acidic residues; the sequence is VREGAKHAGDADP. Positions 126–171 are disordered; it reads VREGAKHAGDADPYRVSGVEEEAGGSGEVQAEFDAEDTGDRNRQDD.

It belongs to the RbfA family. As to quaternary structure, monomer. Binds 30S ribosomal subunits, but not 50S ribosomal subunits or 70S ribosomes.

It localises to the cytoplasm. One of several proteins that assist in the late maturation steps of the functional core of the 30S ribosomal subunit. Associates with free 30S ribosomal subunits (but not with 30S subunits that are part of 70S ribosomes or polysomes). Required for efficient processing of 16S rRNA. May interact with the 5'-terminal helix region of 16S rRNA. The chain is Ribosome-binding factor A from Mycobacterium sp. (strain JLS).